The following is a 64-amino-acid chain: Prokaryotic ubiquitin-like protein Pup (64 aa).

The segment covering 1 to 11 has biased composition (basic and acidic residues); sequence MAQEQTKRGGG. The segment at 1–37 is disordered; that stretch reads MAQEQTKRGGGGDDEDDFASSTAAGQERREKLAEDTD. Residues 21–58 are ARC ATPase binding; it reads STAAGQERREKLAEDTDDLLDEIDDVLEENAEDFVRAY. Residues 24–52 are a coiled coil; it reads AGQERREKLAEDTDDLLDEIDDVLEENAE. The residue at position 64 (glutamine 64) is a Deamidated glutamine. An Isoglutamyl lysine isopeptide (Gln-Lys) (interchain with K-? in acceptor proteins) cross-link involves residue glutamine 64.

It belongs to the prokaryotic ubiquitin-like protein family. Strongly interacts with the proteasome-associated ATPase ARC through a hydrophobic interface; the interacting region of Pup lies in its C-terminal half. There is one Pup binding site per ARC hexamer ring. Post-translationally, is modified by deamidation of its C-terminal glutamine to glutamate by the deamidase Dop, a prerequisite to the subsequent pupylation process.

Its pathway is protein degradation; proteasomal Pup-dependent pathway. Protein modifier that is covalently attached to lysine residues of substrate proteins, thereby targeting them for proteasomal degradation. The tagging system is termed pupylation. The sequence is that of Prokaryotic ubiquitin-like protein Pup from Mycolicibacterium paratuberculosis (strain ATCC BAA-968 / K-10) (Mycobacterium paratuberculosis).